A 573-amino-acid chain; its full sequence is Glucocorticoid modulatory element-binding protein 1 (573 aa).

An N-acetylalanine modification is found at Ala-2. An SAND domain is found at 82–166 (TGTIEANEDM…RKMMDSGQID (85 aa)). Cys-113 provides a ligand contact to Zn(2+). Residues Lys-139, Lys-143, Lys-146, and Arg-157 each coordinate DNA. The Zn(2+) site is built by His-170, Cys-174, and Cys-178. A coiled-coil region spans residues 321 to 367 (LDNRRNQVEQGEEQFLYTLTDLERQLEEQKKQGQDHRLKSQTVQNVV). The disordered stretch occupies residues 370 to 398 (PVSTPKPPKRPRLQRPASTTVLSPSPPVQ).

In terms of assembly, homodimer, and heterodimer of GMEB1 and GMEB2. GMEB1 and GMEB2 form the parvovirus initiator complex (PIF). Interacts with the glucocorticoid receptor (NR3C1) and NCOA2/TIF2. May interact with HSP27 and CREB-binding protein (CBP).

It is found in the nucleus. It localises to the cytoplasm. Functionally, trans-acting factor that binds to glucocorticoid modulatory elements (GME) present in the TAT (tyrosine aminotransferase) promoter and increases sensitivity to low concentrations of glucocorticoids. Also binds to the transferrin receptor promoter. Essential auxiliary factor for the replication of parvoviruses. The polypeptide is Glucocorticoid modulatory element-binding protein 1 (GMEB1) (Homo sapiens (Human)).